Reading from the N-terminus, the 321-residue chain is Anthranilate phosphoribosyltransferase (321 aa).

5-phospho-alpha-D-ribose 1-diphosphate-binding positions include Gly72, 75 to 76 (GD), Thr80, 82 to 85 (NVST), 99 to 107 (KHGNVSITS), and Ser111. Residue Gly72 coordinates anthranilate. Ser84 serves as a coordination point for Mg(2+). Asn102 is an anthranilate binding site. Arg157 serves as a coordination point for anthranilate. Residues Asp216 and Glu217 each coordinate Mg(2+).

Belongs to the anthranilate phosphoribosyltransferase family. As to quaternary structure, homodimer. Mg(2+) serves as cofactor.

It catalyses the reaction N-(5-phospho-beta-D-ribosyl)anthranilate + diphosphate = 5-phospho-alpha-D-ribose 1-diphosphate + anthranilate. Its pathway is amino-acid biosynthesis; L-tryptophan biosynthesis; L-tryptophan from chorismate: step 2/5. In terms of biological role, catalyzes the transfer of the phosphoribosyl group of 5-phosphorylribose-1-pyrophosphate (PRPP) to anthranilate to yield N-(5'-phosphoribosyl)-anthranilate (PRA). The polypeptide is Anthranilate phosphoribosyltransferase (Methanococcus maripaludis (strain C5 / ATCC BAA-1333)).